The sequence spans 277 residues: MMERFPRLAQRVLSVPFTPKYLKSCKKTNPLTSHLMQLRGSQRPIFIQWNLQGRPSVCTDLISKKNYSSATARAGWFLGLGEKKKQAMPDIVKAGDPVLHEPSQDIPLEEIGSERIQKIIEEMVKVMRNAPGVGLAAPQIGIPLKIIVLEDTNEYISYAPKDETKAQDRRPFGLLVIINPKLKKKGNKTALFFEGCLSVDGFRAVVERHLEVEVTGLDRNGKAIKVDASGWQARILQHEYDHLDGTLYVDKMAPRTFRTVENLDLPLAAGCPKLGVC.

Zn(2+) is bound by residues Cys196 and His238. The active site involves Glu239. Residue His242 participates in Zn(2+) binding.

Belongs to the polypeptide deformylase family. Zn(2+) serves as cofactor.

It localises to the plastid. The protein localises to the chloroplast stroma. It carries out the reaction N-terminal N-formyl-L-methionyl-[peptide] + H2O = N-terminal L-methionyl-[peptide] + formate. In terms of biological role, removes the formyl group from the N-terminal Met of newly synthesized proteins. This chain is Peptide deformylase 1A, chloroplastic (PDF1A), found in Solanum lycopersicum (Tomato).